We begin with the raw amino-acid sequence, 143 residues long: Transcription antitermination protein NusB (143 aa).

Belongs to the NusB family.

In terms of biological role, involved in transcription antitermination. Required for transcription of ribosomal RNA (rRNA) genes. Binds specifically to the boxA antiterminator sequence of the ribosomal RNA (rrn) operons. This chain is Transcription antitermination protein NusB, found in Methylacidiphilum infernorum (isolate V4) (Methylokorus infernorum (strain V4)).